A 542-amino-acid chain; its full sequence is DNA-binding protein modulo (542 aa).

The segment at methionine 1 to lysine 166 is disordered. 2 positions are modified to phosphoserine: serine 42 and serine 44. A compositionally biased stretch (acidic residues) spans serine 59–proline 114. 3 positions are modified to phosphoserine: serine 120, serine 129, and serine 142. Acidic residues predominate over residues alanine 123–alanine 135. Positions proline 136–glycine 158 are enriched in basic and acidic residues. 4 RRM domains span residues glutamine 175–asparagine 251, arginine 258–glutamine 331, leucine 340–serine 429, and arginine 420–leucine 489. Phosphoserine is present on serine 304. Phosphoserine; by PKA is present on serine 330. Serine 443 carries the phosphoserine modification. The interval arginine 505–phenylalanine 542 is disordered.

The N-terminus is blocked.

It is found in the nucleus. Its function is as follows. Its capacity to bind DNA and protein(s), and its differential expression during development suggest a role in the regulation of gene expression during Drosophila development. It could, in interaction with other factors, be required for the translation of instructions provided by pattern forming genes and controls, via chromatin changes, the activity of genes critical for the process of morphogenesis of several embryonic territories. The polypeptide is DNA-binding protein modulo (mod) (Drosophila melanogaster (Fruit fly)).